We begin with the raw amino-acid sequence, 342 residues long: Ferredoxin--NADP reductase (342 aa).

Residues cysteine 17, aspartate 36, glutamine 44, tyrosine 49, isoleucine 89, phenylalanine 124, aspartate 289, and threonine 330 each contribute to the FAD site.

This sequence belongs to the ferredoxin--NADP reductase type 2 family. In terms of assembly, homodimer. FAD is required as a cofactor.

It carries out the reaction 2 reduced [2Fe-2S]-[ferredoxin] + NADP(+) + H(+) = 2 oxidized [2Fe-2S]-[ferredoxin] + NADPH. This Rhodopseudomonas palustris (strain BisB18) protein is Ferredoxin--NADP reductase.